A 500-amino-acid polypeptide reads, in one-letter code: NAD(P)H-quinone oxidoreductase chain 4, chloroplastic (500 aa).

The next 14 membrane-spanning stretches (helical) occupy residues 4–24 (FPWL…IFLL), 37–57 (LCIC…HFQL), 87–107 (IGPI…AWPV), 111–131 (AQLF…SFSS), 134–154 (LLLF…LLSM), 167–187 (FILY…GIGL), 208–228 (ALEV…LPII), 242–262 (HYST…YGLV), 272–292 (AHCL…IYAA), 305–325 (IAYS…SLSD), 330–350 (GAIL…FLAG), 386–406 (LALP…GIIT), 416–436 (ILIA…SLSM), and 462–482 (LFVS…PDFV).

Belongs to the complex I subunit 4 family.

The protein resides in the plastid. Its subcellular location is the chloroplast thylakoid membrane. It carries out the reaction a plastoquinone + NADH + (n+1) H(+)(in) = a plastoquinol + NAD(+) + n H(+)(out). The enzyme catalyses a plastoquinone + NADPH + (n+1) H(+)(in) = a plastoquinol + NADP(+) + n H(+)(out). The polypeptide is NAD(P)H-quinone oxidoreductase chain 4, chloroplastic (Oenothera biennis (German evening primrose)).